The primary structure comprises 540 residues: 2,3-bisphosphoglycerate-independent phosphoglycerate mutase (540 aa).

Residues Asp-25 and Ser-75 each coordinate Mn(2+). Catalysis depends on Ser-75, which acts as the Phosphoserine intermediate. Substrate-binding positions include His-136, 166-167, Arg-198, Arg-204, 269-272, and Lys-342; these read RD and RPDR. Positions 409, 413, 450, 451, and 468 each coordinate Mn(2+).

Belongs to the BPG-independent phosphoglycerate mutase family. In terms of assembly, monomer. The cofactor is Mn(2+).

It carries out the reaction (2R)-2-phosphoglycerate = (2R)-3-phosphoglycerate. The protein operates within carbohydrate degradation; glycolysis; pyruvate from D-glyceraldehyde 3-phosphate: step 3/5. In terms of biological role, catalyzes the interconversion of 2-phosphoglycerate and 3-phosphoglycerate. The sequence is that of 2,3-bisphosphoglycerate-independent phosphoglycerate mutase from Prochlorococcus marinus subsp. pastoris (strain CCMP1986 / NIES-2087 / MED4).